The sequence spans 258 residues: MNRRWNLVLATVALALSVASCDVRSKDKDKDQGSLVEYKDNKDTNDIELSDNQKLSRTFGHLLARQLRKSEDMFFDIAEVAKGLQAELVCKSAPLTETEYEEKMAEVQKLVFEKKSKENLSLAEKFLKENSKNAGVVEVQPSKLQYKIIKEGAGKAISGKPSALLHYKGSFINGQVFSSSEGNNEPILLPLGQTIPGFALGMQGMKEGETRVLYIHPDLAYGTAGQLPPNSLLIFEINLIQASADEVAAVPQEGNQGE.

An N-terminal signal peptide occupies residues 1-15 (MNRRWNLVLATVALA). The PPIase FKBP-type domain occupies 160–243 (KPSALLHYKG…IFEINLIQAS (84 aa)).

It belongs to the FKBP-type PPIase family.

Its subcellular location is the cell outer membrane. It carries out the reaction [protein]-peptidylproline (omega=180) = [protein]-peptidylproline (omega=0). In terms of biological role, PPIases accelerate the folding of proteins. This Chlamydia pneumoniae (Chlamydophila pneumoniae) protein is Peptidyl-prolyl cis-trans isomerase Mip (mip).